A 329-amino-acid polypeptide reads, in one-letter code: Malate dehydrogenase (329 aa).

13-19 contributes to the NAD(+) binding site; the sequence is GAAGNIS. Residues arginine 94 and arginine 100 each coordinate substrate. NAD(+)-binding positions include asparagine 107, glutamine 114, and 131 to 133; that span reads VGN. Substrate contacts are provided by asparagine 133 and arginine 164. Histidine 189 functions as the Proton acceptor in the catalytic mechanism.

The protein belongs to the LDH/MDH superfamily. MDH type 2 family.

The enzyme catalyses (S)-malate + NAD(+) = oxaloacetate + NADH + H(+). Catalyzes the reversible oxidation of malate to oxaloacetate. The sequence is that of Malate dehydrogenase from Psychrobacter arcticus (strain DSM 17307 / VKM B-2377 / 273-4).